The chain runs to 312 residues: DNA-directed RNA polymerase subunit alpha (312 aa).

An alpha N-terminal domain (alpha-NTD) region spans residues 1–229 (MLQYQIDRID…ELFQPLATVT (229 aa)). Residues 246-312 (IPLEELNLSV…ISIPQSRTSV (67 aa)) form an alpha C-terminal domain (alpha-CTD) region.

Belongs to the RNA polymerase alpha chain family. In terms of assembly, in cyanobacteria the RNAP catalytic core is composed of 2 alpha, 1 beta, 1 beta', 1 gamma and 1 omega subunit. When a sigma factor is associated with the core the holoenzyme is formed, which can initiate transcription.

It catalyses the reaction RNA(n) + a ribonucleoside 5'-triphosphate = RNA(n+1) + diphosphate. In terms of biological role, DNA-dependent RNA polymerase catalyzes the transcription of DNA into RNA using the four ribonucleoside triphosphates as substrates. In Prochlorococcus marinus subsp. pastoris (strain CCMP1986 / NIES-2087 / MED4), this protein is DNA-directed RNA polymerase subunit alpha.